The primary structure comprises 312 residues: MKIGVICGGLSSEREVSLRTGDAIFRALLKKGYNVVKIDMDRNIAETLKKENIDFAFIALHGKYGEDGAIQGLLEIMDIPYTGSGILASSLAIDKIMTKKILKAEGIPTPNYIAFSFDENPNFEAISSEILQTLKLPVVIKAPREGSTIGIEFVFSKQELPKAIKKVLEIDKQLLVEEFIEGVEVTASVLGNSNPVVLPLIEIVSKTRFYDYEAKYTPGLSEHIIPPRIAPELSQKAIEYARKTYKALGCRGFARVDFMIDVRKNEAYVLEVNTIPGMTATSLFPDAAKAQGISFEDLVEKILMLGLEGRQK.

Residues K99–M304 enclose the ATP-grasp domain. Position 131–186 (L131–T186) interacts with ATP. 3 residues coordinate Mg(2+): D257, E271, and N273.

Belongs to the D-alanine--D-alanine ligase family. It depends on Mg(2+) as a cofactor. The cofactor is Mn(2+).

The protein localises to the cytoplasm. The catalysed reaction is 2 D-alanine + ATP = D-alanyl-D-alanine + ADP + phosphate + H(+). It participates in cell wall biogenesis; peptidoglycan biosynthesis. In terms of biological role, cell wall formation. The chain is D-alanine--D-alanine ligase from Carboxydothermus hydrogenoformans (strain ATCC BAA-161 / DSM 6008 / Z-2901).